The sequence spans 1001 residues: Kinesin-like protein KIN-14P (1001 aa).

The Calponin-homology (CH) domain maps to 53–172 (AIRRYEAANW…CVLSLRSFSE (120 aa)). Positions 284-300 (NESVKHALDPNDDKLLS) are enriched in basic and acidic residues. The tract at residues 284-322 (NESVKHALDPNDDKLLSRADTPPEMESTCTCSTGNMDEE) is disordered. The 323-residue stretch at 426–748 (NIRVYCRVRP…LKFAERVATV (323 aa)) folds into the Kinesin motor domain. 509 to 516 (GQTGSGKT) contributes to the ATP binding site. Residues 756–784 (NKEGGEVKELKEQIACLKAALAKKDGETE) are a coiled coil. Disordered stretches follow at residues 804 to 830 (PPAF…QKKR) and 890 to 1001 (EPQW…SAKK). Polar residues predominate over residues 972–984 (PSASTKNGKQLSL).

Belongs to the TRAFAC class myosin-kinesin ATPase superfamily. Kinesin family. KIN-14 subfamily.

This chain is Kinesin-like protein KIN-14P, found in Oryza sativa subsp. japonica (Rice).